Consider the following 188-residue polypeptide: Pro-adrenomedullin (188 aa).

An N-terminal signal peptide occupies residues 1–21 (MKLVPVALMYLGSLAFLGADT). Arg41 is modified (arginine amide). Positions 45 to 92 (ELRLSSSYPTGIADLKAGPAQTVIRPQDVKGSSRSPQASIPDAARIRV) are excised as a propeptide. A disulfide bond links Cys110 and Cys115. The interval 131 to 177 (DKDGVAPRSKISPQGYGRRRRRSLPEASLGRTLRSQEPQAHGAPASP) is disordered. Tyr146 carries the tyrosine amide modification. A propeptide spans 153–188 (SLPEASLGRTLRSQEPQAHGAPASPAHQVLATLFRI) (preproAM C-terminal fragment).

It belongs to the adrenomedullin family. As to expression, highly expressed in adrenal glands, lung and kidney.

The protein resides in the secreted. Functionally, adrenomedullin/ADM and proadrenomedullin N-20 terminal peptide/PAMP are peptide hormones that act as potent hypotensive and vasodilatator agents. Numerous actions have been reported most related to the physiologic control of fluid and electrolyte homeostasis. Its function is as follows. ADM function is mediated by the CALCRL-RAMP2 and CALCRL-RAMP3 receptor complexes with ADM showing the highest potency for the CALCRL-RAMP2 complex. This Sus scrofa (Pig) protein is Pro-adrenomedullin (ADM).